A 455-amino-acid polypeptide reads, in one-letter code: Tumor necrosis factor receptor superfamily member 1A (455 aa).

The signal sequence occupies residues 1-29 (MGLSTVPDLLLPLVLLELLVGIYPSGVIG). At 30-211 (LVPHLGDREK…VKGTEDSGTT (182 aa)) the chain is on the extracellular side. TNFR-Cys repeat units lie at residues 43–82 (VCPQ…TDCR), 83–125 (ECES…DTVC), 126–166 (GCRK…NTVC), and 167–196 (TCHA…KLCL). Intrachain disulfides connect cysteine 44–cysteine 58, cysteine 59–cysteine 72, cysteine 62–cysteine 81, cysteine 84–cysteine 99, cysteine 102–cysteine 117, cysteine 105–cysteine 125, and cysteine 127–cysteine 143. An N-linked (GlcNAc...) asparagine glycan is attached at asparagine 54. Asparagine 145 and asparagine 151 each carry an N-linked (GlcNAc...) asparagine glycan. Disulfide bonds link cysteine 146-cysteine 158, cysteine 149-cysteine 166, cysteine 168-cysteine 179, cysteine 182-cysteine 195, and cysteine 185-cysteine 191. A helical membrane pass occupies residues 212 to 232 (VLLPLVIFFGLCLLSLLFIGL). The Cytoplasmic portion of the chain corresponds to 233–455 (MYRYQRWKSK…ALPPAPSLLR (223 aa)). The segment at 254-273 (EKEGELEGTTTKPLAPNPSF) is disordered. An N-SMase activation domain (NSD) region spans residues 338–348 (LQKWEDSAHKP). The Death domain occupies 356-441 (PATLYAVVEN…GCLEDIEEAL (86 aa)). (Microbial infection) N-beta-linked (GlcNAc) arginine glycosylation occurs at arginine 376.

In terms of assembly, binding of TNF to the extracellular domain leads to homotrimerization. The aggregated death domains provide a novel molecular interface that interacts specifically with the death domain of TRADD. Various TRADD-interacting proteins such as TRAFS, RIPK1 and possibly FADD, are recruited to the complex by their association with TRADD. This complex activates at least two distinct signaling cascades, apoptosis and NF-kappa-B signaling. Interacts with BAG4, BABAM2, FEM1B, GRB2, SQSTM1 and TRPC4AP. Interacts directly with NOL3 (via CARD domain); inhibits TNF-signaling pathway. Interacts with SH3RF2, TRADD and RIPK1. SH3RF2 facilitates the recruitment of RIPK1 and TRADD to TNFRSF1A in a TNF-alpha-dependent process. Interacts with PGLYRP1; this interaction is important for cell death induction. Interacts (via death domain) with MADD (via death domain). As to quaternary structure, (Microbial infection) Interacts with mumps virus protein SH; this interaction inhibits downstream NF-kappa-B pathway activation. (Microbial infection) Interacts with HCV core protein. In terms of assembly, (Microbial infection) Interacts with human cytomegalovirus/HHV-5 protein UL138. As to quaternary structure, (Microbial infection) Interacts with host TNFRSF1A; this interaction leads to the stimulation of both surface expression and shedding of TNFRSF1A. In terms of processing, the soluble form is produced from the membrane form by proteolytic processing. (Microbial infection) Glycosylated at Arg-376 by enteropathogenic E.coli protein NleB1 and S.typhimurium protein Ssek3: arginine GlcNAcylation prevents homotypic/heterotypic death domain interactions.

It is found in the cell membrane. Its subcellular location is the golgi apparatus membrane. It localises to the secreted. In terms of biological role, receptor for TNFSF2/TNF-alpha and homotrimeric TNFSF1/lymphotoxin-alpha. The adapter molecule FADD recruits caspase-8 to the activated receptor. The resulting death-inducing signaling complex (DISC) performs caspase-8 proteolytic activation which initiates the subsequent cascade of caspases (aspartate-specific cysteine proteases) mediating apoptosis. Contributes to the induction of non-cytocidal TNF effects including anti-viral state and activation of the acid sphingomyelinase. This chain is Tumor necrosis factor receptor superfamily member 1A (TNFRSF1A), found in Homo sapiens (Human).